Consider the following 340-residue polypeptide: GTP 3',8-cyclase (340 aa).

The Radical SAM core domain occupies 20 to 246; sequence RFERQYVYLR…PKALSDGPAK (227 aa). Arginine 29 is a binding site for GTP. [4Fe-4S] cluster-binding residues include cysteine 36 and cysteine 40. Tyrosine 42 contacts S-adenosyl-L-methionine. Cysteine 43 serves as a coordination point for [4Fe-4S] cluster. Arginine 79 provides a ligand contact to GTP. Residue glycine 83 participates in S-adenosyl-L-methionine binding. Threonine 110 is a GTP binding site. S-adenosyl-L-methionine is bound at residue serine 134. Lysine 171 is a binding site for GTP. Methionine 205 contacts S-adenosyl-L-methionine. Residues cysteine 268 and cysteine 271 each contribute to the [4Fe-4S] cluster site. 273 to 275 provides a ligand contact to GTP; it reads RLR. A [4Fe-4S] cluster-binding site is contributed by cysteine 285.

It belongs to the radical SAM superfamily. MoaA family. As to quaternary structure, monomer and homodimer. [4Fe-4S] cluster is required as a cofactor.

The enzyme catalyses GTP + AH2 + S-adenosyl-L-methionine = (8S)-3',8-cyclo-7,8-dihydroguanosine 5'-triphosphate + 5'-deoxyadenosine + L-methionine + A + H(+). It functions in the pathway cofactor biosynthesis; molybdopterin biosynthesis. In terms of biological role, catalyzes the cyclization of GTP to (8S)-3',8-cyclo-7,8-dihydroguanosine 5'-triphosphate. This chain is GTP 3',8-cyclase, found in Actinobacillus pleuropneumoniae serotype 3 (strain JL03).